The primary structure comprises 363 residues: NAD(P)H-quinone oxidoreductase subunit 1, chloroplastic (363 aa).

Helical transmembrane passes span 30–50 (LIPIFTLVLGITIGVLVIVWL), 104–124 (IAVISILLSYLVIPFSYHLVL), 127–147 (LSIGVFLWIAISSIAPVGLLM), 248–268 (YSGIKFGLFYVASYLNLLVSS), 300–320 (VFGTIIGIFITLAKTYLFLFI), and 343–363 (FLLPISLGNLLLTTCSQLISL).

The protein belongs to the complex I subunit 1 family. In terms of assembly, NDH is composed of at least 16 different subunits, 5 of which are encoded in the nucleus.

The protein localises to the plastid. The protein resides in the chloroplast thylakoid membrane. The catalysed reaction is a plastoquinone + NADH + (n+1) H(+)(in) = a plastoquinol + NAD(+) + n H(+)(out). It catalyses the reaction a plastoquinone + NADPH + (n+1) H(+)(in) = a plastoquinol + NADP(+) + n H(+)(out). Its function is as follows. NDH shuttles electrons from NAD(P)H:plastoquinone, via FMN and iron-sulfur (Fe-S) centers, to quinones in the photosynthetic chain and possibly in a chloroplast respiratory chain. The immediate electron acceptor for the enzyme in this species is believed to be plastoquinone. Couples the redox reaction to proton translocation, and thus conserves the redox energy in a proton gradient. The chain is NAD(P)H-quinone oxidoreductase subunit 1, chloroplastic from Lactuca sativa (Garden lettuce).